We begin with the raw amino-acid sequence, 522 residues long: Peptide methionine sulfoxide reductase MsrA/MsrB (522 aa).

Residues 17–174 enclose the Thioredoxin domain; sequence LALGACSPKI…ALALIRDPNA (158 aa). A disulfide bridge links Cys68 with Cys71. Residues 199-354 are peptide methionine sulfoxide reductase A; the sequence is RTIYLAGGCF…PNGYCHIDIR (156 aa). Cys207 is an active-site residue. The 124-residue stretch at 383 to 506 folds into the MsrB domain; that stretch reads DAELKRTLTE…NGASLKFIPL (124 aa). Residues Cys440 and Cys495 are joined by a disulfide bond. The active-site Nucleophile is Cys495.

The protein in the N-terminal section; belongs to the thioredoxin family. In the central section; belongs to the MsrA Met sulfoxide reductase family. This sequence in the C-terminal section; belongs to the MsrB Met sulfoxide reductase family.

It catalyses the reaction L-methionyl-[protein] + [thioredoxin]-disulfide + H2O = L-methionyl-(S)-S-oxide-[protein] + [thioredoxin]-dithiol. The enzyme catalyses [thioredoxin]-disulfide + L-methionine + H2O = L-methionine (S)-S-oxide + [thioredoxin]-dithiol. The catalysed reaction is L-methionyl-[protein] + [thioredoxin]-disulfide + H2O = L-methionyl-(R)-S-oxide-[protein] + [thioredoxin]-dithiol. In terms of biological role, has an important function as a repair enzyme for proteins that have been inactivated by oxidation. Catalyzes the reversible oxidation-reduction of methionine sulfoxide in proteins to methionine. In Neisseria meningitidis serogroup A / serotype 4A (strain DSM 15465 / Z2491), this protein is Peptide methionine sulfoxide reductase MsrA/MsrB (msrAB).